We begin with the raw amino-acid sequence, 247 residues long: Protein AC124 (247 aa).

The protein resides in the host cytoplasm. The protein localises to the host nucleus. In terms of biological role, accelerates mortality in insect larvae. This Lepidoptera (butterflies and moths) protein is Protein AC124.